We begin with the raw amino-acid sequence, 991 residues long: Pentatricopeptide repeat-containing protein At1g73710 (991 aa).

Disordered stretches follow at residues 1 to 27 (MLQP…HHHH) and 61 to 81 (SSSS…RKRK). The segment covering 15–27 (VRHHHHHHHHHHH) has biased composition (basic residues). Residues 61–73 (SSSSVSPPRCSKP) show a composition bias toward low complexity. PPR repeat units lie at residues 144 to 178 (NVIH…GVLP), 179 to 213 (TNNT…MHFP), 214 to 248 (DEVT…KVDL), 304 to 338 (LTST…GVPI), 339 to 373 (DTVT…GISP), 374 to 408 (DTKT…GLFP), 409 to 443 (DTVT…SIRI), 444 to 474 (DEHS…FQLD), 478 to 513 (SSTT…GQRN), 514 to 548 (DVLE…GTWP), 549 to 583 (DECT…GCKP), 584 to 618 (GCKT…GVKP), 619 to 653 (NEVV…GVQS), 654 to 688 (NHIV…EGGP), 689 to 719 (DVAA…LREK), 723 to 757 (DVIS…GLLS), 758 to 792 (DCTS…RKLL), 862 to 896 (EHFA…GLEP), and 897 to 931 (DIVT…ELEP). Positions 965 to 974 (AERECSSRSG) are enriched in basic and acidic residues. Positions 965-991 (AERECSSRSGEEEEDDEEENSEEDEAF) are disordered. Positions 975–991 (EEEEDDEEENSEEDEAF) are enriched in acidic residues.

This sequence belongs to the PPR family. P subfamily.

This Arabidopsis thaliana (Mouse-ear cress) protein is Pentatricopeptide repeat-containing protein At1g73710.